The sequence spans 78 residues: Small integral membrane protein 1 (78 aa).

Met1 carries the N-acetylmethionine modification. The segment covering 1-18 has biased composition (basic and acidic residues); sequence MQPQESHVHYSRWEDGSR. The interval 1–20 is disordered; it reads MQPQESHVHYSRWEDGSRDG. Topologically, residues 1–46 are cytoplasmic; it reads MQPQESHVHYSRWEDGSRDGVSLGAVSSTEEASRCRRISQRLCTGK. 4 positions are modified to phosphoserine: Ser6, Ser17, Ser22, and Ser27. A helical; Signal-anchor for type II membrane protein membrane pass occupies residues 47–67; it reads LGIAMKVLGGVALFWIIFILG. At 68–78 the chain is on the extracellular side; the sequence is YLTGYYVHKCK. The tract at residues 68–78 is displays the Vel antigen; it reads YLTGYYVHKCK.

It belongs to the SMIM1 family. In terms of assembly, homooligomer; disulfide-linked. Highly expressed in the bone marrow and expressed at lower levels in non-hematopoietic tissues. Highly expressed in erythroleukemia cell lines. Up-regulated in CD34+ hematopoietic progenitors cultured toward red blood cells.

The protein resides in the cell membrane. In terms of biological role, regulator of red blood cell formation. This is Small integral membrane protein 1 from Homo sapiens (Human).